Consider the following 131-residue polypeptide: MSMSDPIADMLTRIRNAQQVDKTTVTMPASKLKVAIATVLKDEGYIDGYSVKGTQAKPELEITLKYYAGRPVIERIERVSRPGLRIYKGRTSIPQVMNGLGVAIVSTSRGVMTDRKARANGVGGEVLCYVA.

It belongs to the universal ribosomal protein uS8 family. In terms of assembly, part of the 30S ribosomal subunit. Contacts proteins S5 and S12.

Functionally, one of the primary rRNA binding proteins, it binds directly to 16S rRNA central domain where it helps coordinate assembly of the platform of the 30S subunit. The sequence is that of Small ribosomal subunit protein uS8 from Bordetella parapertussis (strain 12822 / ATCC BAA-587 / NCTC 13253).